We begin with the raw amino-acid sequence, 179 residues long: ATP synthase subunit delta (179 aa).

The protein belongs to the ATPase delta chain family. F-type ATPases have 2 components, F(1) - the catalytic core - and F(0) - the membrane proton channel. F(1) has five subunits: alpha(3), beta(3), gamma(1), delta(1), epsilon(1). F(0) has three main subunits: a(1), b(2) and c(10-14). The alpha and beta chains form an alternating ring which encloses part of the gamma chain. F(1) is attached to F(0) by a central stalk formed by the gamma and epsilon chains, while a peripheral stalk is formed by the delta and b chains.

It localises to the cell inner membrane. Functionally, f(1)F(0) ATP synthase produces ATP from ADP in the presence of a proton or sodium gradient. F-type ATPases consist of two structural domains, F(1) containing the extramembraneous catalytic core and F(0) containing the membrane proton channel, linked together by a central stalk and a peripheral stalk. During catalysis, ATP synthesis in the catalytic domain of F(1) is coupled via a rotary mechanism of the central stalk subunits to proton translocation. Its function is as follows. This protein is part of the stalk that links CF(0) to CF(1). It either transmits conformational changes from CF(0) to CF(1) or is implicated in proton conduction. This is ATP synthase subunit delta from Burkholderia vietnamiensis (strain G4 / LMG 22486) (Burkholderia cepacia (strain R1808)).